Here is a 525-residue protein sequence, read N- to C-terminus: Cytochrome P450 703A2 (525 aa).

A helical transmembrane segment spans residues 3–23; the sequence is PFLLSIILCSWIFVVVSWKKL. Cys455 provides a ligand contact to heme.

This sequence belongs to the cytochrome P450 family. Requires heme as cofactor.

It is found in the membrane. The enzyme catalyses dodecanoate + reduced [NADPH--hemoprotein reductase] + O2 = 7-hydroxydodecanoate + oxidized [NADPH--hemoprotein reductase] + H2O + H(+). Its function is as follows. Involved in pollen exine and anther epicuticular layer development. Catalyzes the in-chain hydroxylation of lauric acid (C12:0) preferentially on position 7, generating 7-hydroxylated lauric acid. Does not possess activity with other fatty acids (C14:0, C16:0, C16:1, and C18:0). Participates in a conserved pathway of in-chain hydroxylation of lauric acid required for anther cuticle and pollen exine formation. Directly regulated by TDR, a known regulator of tapetum programmed cell death (PCD) and pollen exine formation. The sequence is that of Cytochrome P450 703A2 from Oryza sativa subsp. japonica (Rice).